The following is a 212-amino-acid chain: Pyrrolidone-carboxylate peptidase (212 aa).

Residues glutamate 80, cysteine 143, and histidine 165 contribute to the active site.

This sequence belongs to the peptidase C15 family. As to quaternary structure, homotetramer.

The protein localises to the cytoplasm. The enzyme catalyses Release of an N-terminal pyroglutamyl group from a polypeptide, the second amino acid generally not being Pro.. Its function is as follows. Removes 5-oxoproline from various penultimate amino acid residues except L-proline. The chain is Pyrrolidone-carboxylate peptidase from Vibrio parahaemolyticus serotype O3:K6 (strain RIMD 2210633).